We begin with the raw amino-acid sequence, 472 residues long: Ribosomal protein uS12 methylthiotransferase RimO (472 aa).

The 111-residue stretch at 33-143 folds into the MTTase N-terminal domain; that stretch reads NRIGFVSLGC…VLKHVHKYVP (111 aa). Residues C42, C78, C107, C175, C179, and C182 each contribute to the [4Fe-4S] cluster site. One can recognise a Radical SAM core domain in the interval 161 to 398; it reads LTPKHYAYLK…MEVQAEISAE (238 aa). Positions 401-467 constitute a TRAM domain; the sequence is ARFVGRTLDI…EHDLWAEVVD (67 aa).

The protein belongs to the methylthiotransferase family. RimO subfamily. The cofactor is [4Fe-4S] cluster.

It localises to the cytoplasm. It carries out the reaction L-aspartate(89)-[ribosomal protein uS12]-hydrogen + (sulfur carrier)-SH + AH2 + 2 S-adenosyl-L-methionine = 3-methylsulfanyl-L-aspartate(89)-[ribosomal protein uS12]-hydrogen + (sulfur carrier)-H + 5'-deoxyadenosine + L-methionine + A + S-adenosyl-L-homocysteine + 2 H(+). Catalyzes the methylthiolation of an aspartic acid residue of ribosomal protein uS12. In Shewanella baltica (strain OS185), this protein is Ribosomal protein uS12 methylthiotransferase RimO.